The sequence spans 429 residues: Enolase (429 aa).

Residue glutamine 165 participates in (2R)-2-phosphoglycerate binding. Glutamate 207 acts as the Proton donor in catalysis. Mg(2+) is bound by residues aspartate 244, glutamate 287, and aspartate 314. Positions 339, 368, 369, and 390 each coordinate (2R)-2-phosphoglycerate. Lysine 339 functions as the Proton acceptor in the catalytic mechanism.

Belongs to the enolase family. Requires Mg(2+) as cofactor.

The protein resides in the cytoplasm. Its subcellular location is the secreted. It localises to the cell surface. It carries out the reaction (2R)-2-phosphoglycerate = phosphoenolpyruvate + H2O. Its pathway is carbohydrate degradation; glycolysis; pyruvate from D-glyceraldehyde 3-phosphate: step 4/5. Functionally, catalyzes the reversible conversion of 2-phosphoglycerate (2-PG) into phosphoenolpyruvate (PEP). It is essential for the degradation of carbohydrates via glycolysis. The polypeptide is Enolase (Roseiflexus sp. (strain RS-1)).